The chain runs to 327 residues: Biotin synthase (327 aa).

Residues 49-273 (FNKDKIDLCS…ICIARIALPD (225 aa)) form the Radical SAM core domain. 3 residues coordinate [4Fe-4S] cluster: Cys67, Cys71, and Cys74. [2Fe-2S] cluster-binding residues include Ser110, Cys142, Cys201, and Arg277.

It belongs to the radical SAM superfamily. Biotin synthase family. As to quaternary structure, homodimer. [4Fe-4S] cluster is required as a cofactor. Requires [2Fe-2S] cluster as cofactor.

The catalysed reaction is (4R,5S)-dethiobiotin + (sulfur carrier)-SH + 2 reduced [2Fe-2S]-[ferredoxin] + 2 S-adenosyl-L-methionine = (sulfur carrier)-H + biotin + 2 5'-deoxyadenosine + 2 L-methionine + 2 oxidized [2Fe-2S]-[ferredoxin]. The protein operates within cofactor biosynthesis; biotin biosynthesis; biotin from 7,8-diaminononanoate: step 2/2. In terms of biological role, catalyzes the conversion of dethiobiotin (DTB) to biotin by the insertion of a sulfur atom into dethiobiotin via a radical-based mechanism. The chain is Biotin synthase from Methanococcus maripaludis (strain C6 / ATCC BAA-1332).